We begin with the raw amino-acid sequence, 826 residues long: MICRWIAFNSSKVSRSLSPFSSLLFTKSSFSVAKMDDESLPTTNSTSDHRGFYKEILFGMKKIGFREFLHGYHFRGLVSELRHVHVEEIMDELMSESSDLSVWFFKELRDIYAFRHSSFSTLLVSHVLAGQRRFKELQVILEQLLQEEGTLCELLSNSFRKWESTGLVWDMLLFLSSRLRMVDDSLYILKKMKDQNLNVSTQSYNSVLYHFRETDKMWDVYKEIKDKNEHTYSTVVDGLCRQQKLEDAVLFLRTSEWKDIGPSVVSFNSIMSGYCKLGFVDMAKSFFCTVLKCGLVPSVYSHNILINGLCLVGSIAEALELASDMNKHGVEPDSVTYNILAKGFHLLGMISGAWEVIRDMLDKGLSPDVITYTILLCGQCQLGNIDMGLVLLKDMLSRGFELNSIIPCSVMLSGLCKTGRIDEALSLFNQMKADGLSPDLVAYSIVIHGLCKLGKFDMALWLYDEMCDKRILPNSRTHGALLLGLCQKGMLLEARSLLDSLISSGETLDIVLYNIVIDGYAKSGCIEEALELFKVVIETGITPSVATFNSLIYGYCKTQNIAEARKILDVIKLYGLAPSVVSYTTLMDAYANCGNTKSIDELRREMKAEGIPPTNVTYSVIFKGLCRGWKHENCNHVLRERIFEKCKQGLRDMESEGIPPDQITYNTIIQYLCRVKHLSGAFVFLEIMKSRNLDASSATYNILIDSLCVYGYIRKADSFIYSLQEQNVSLSKFAYTTLIKAHCVKGDPEMAVKLFHQLLHRGFNVSIRDYSAVINRLCRRHLVNESKFFFCLMLSQGISPDLDICEVMIKSDELLSWTIKWGLLPD.

PPR repeat units follow at residues 228-262, 263-297, 298-332, 333-367, 368-402, 404-438, 439-473, 474-508, 509-543, 544-578, 579-613, 614-648, 661-695, 696-730, 731-765, and 766-800; these read NEHT…DIGP, SVVS…GLVP, SVYS…GVEP, DSVT…GLSP, DVIT…GFEL, SIIP…GLSP, DLVA…RILP, NSRT…GETL, DIVL…GITP, SVAT…GLAP, SVVS…GIPP, TNVT…KCKQ, DQIT…NLDA, SSAT…NVSL, SKFA…GFNV, and SIRD…GISP.

Belongs to the PPR family. P subfamily.

The chain is Putative pentatricopeptide repeat-containing protein At1g13630 from Arabidopsis thaliana (Mouse-ear cress).